The following is a 467-amino-acid chain: Glutamyl-tRNA reductase (467 aa).

Residues 49 to 52 (TCNR), serine 109, 114 to 116 (EQQ), and glutamine 120 contribute to the substrate site. The Nucleophile role is filled by cysteine 50. 189–194 (GAGAMG) contacts NADP(+). The segment at 446-467 (GFSDTTRYGTSPAQSSSKYHAE) is disordered. Residues 447 to 467 (FSDTTRYGTSPAQSSSKYHAE) show a composition bias toward polar residues.

This sequence belongs to the glutamyl-tRNA reductase family. As to quaternary structure, homodimer.

It catalyses the reaction (S)-4-amino-5-oxopentanoate + tRNA(Glu) + NADP(+) = L-glutamyl-tRNA(Glu) + NADPH + H(+). It participates in porphyrin-containing compound metabolism; protoporphyrin-IX biosynthesis; 5-aminolevulinate from L-glutamyl-tRNA(Glu): step 1/2. Catalyzes the NADPH-dependent reduction of glutamyl-tRNA(Glu) to glutamate 1-semialdehyde (GSA). This is Glutamyl-tRNA reductase from Mycobacterium leprae (strain TN).